The primary structure comprises 326 residues: UDP-3-O-acylglucosamine N-acyltransferase (326 aa).

H225 (proton acceptor) is an active-site residue.

The protein belongs to the transferase hexapeptide repeat family. LpxD subfamily. In terms of assembly, homotrimer.

The catalysed reaction is a UDP-3-O-[(3R)-3-hydroxyacyl]-alpha-D-glucosamine + a (3R)-hydroxyacyl-[ACP] = a UDP-2-N,3-O-bis[(3R)-3-hydroxyacyl]-alpha-D-glucosamine + holo-[ACP] + H(+). It functions in the pathway bacterial outer membrane biogenesis; LPS lipid A biosynthesis. In terms of biological role, catalyzes the N-acylation of UDP-3-O-acylglucosamine using 3-hydroxyacyl-ACP as the acyl donor. Is involved in the biosynthesis of lipid A, a phosphorylated glycolipid that anchors the lipopolysaccharide to the outer membrane of the cell. In Verminephrobacter eiseniae (strain EF01-2), this protein is UDP-3-O-acylglucosamine N-acyltransferase.